We begin with the raw amino-acid sequence, 746 residues long: Histone-lysine N-methyltransferase EZH2 (746 aa).

An interaction with DNMT1, DNMT3A and DNMT3B region spans residues methionine 1–alanine 340. Serine 21 bears the Phosphoserine; by PKB/AKT1 mark. Residues lysine 39 to valine 68 form an interaction with EED region. A glycan (O-linked (GlcNAc) serine) is linked at serine 75. The residue at position 76 (serine 76) is a Phosphoserine. The interval glutamine 180–lysine 222 is disordered. Residues asparagine 182 to glutamate 195 are compositionally biased toward acidic residues. The span at arginine 196–lysine 222 shows a compositional bias: basic and acidic residues. The interaction with CDYL stretch occupies residues glutamate 329–proline 522. Threonine 339 is modified (phosphothreonine). Residues alanine 340–proline 426 are disordered. At threonine 345 the chain carries Phosphothreonine; by CDK1 and CDK2. Positions threonine 345–arginine 357 are enriched in basic residues. Phosphoserine occurs at positions 363 and 366. Threonine 367 is modified (phosphothreonine). Basic and acidic residues predominate over residues glutamate 374 to glycine 385. Residue threonine 487 is modified to Phosphothreonine. The 103-residue stretch at cysteine 503 to serine 605 folds into the CXC domain. Residues lysine 612 to arginine 727 form the SET domain. Residue lysine 634 forms a Glycyl lysine isopeptide (Lys-Gly) (interchain with G-Cter in SUMO2) linkage.

The protein belongs to the class V-like SAM-binding methyltransferase superfamily. Histone-lysine methyltransferase family. EZ subfamily. Component of the PRC2/EED-EZH2 complex, which includes EED, EZH2, SUZ12, RBBP4 and RBBP7 and possibly AEBP2. The minimum components required for methyltransferase activity of the PRC2/EED-EZH2 complex are EED, EZH2 and SUZ12. The PRC2 complex may also interact with DNMT1, DNMT3A, DNMT3B and PHF1 via the EZH2 subunit and with SIRT1 via the SUZ12 subunit. Interacts with HDAC1 and HDAC2. Binds ATRX via the SET domain. Interacts with PRAME. Interacts with CDYL. Interacts with CLOCK, BMAL1 and CRY1. Interacts with DNMT3L; the interaction is direct. Interacts with EZHIP; the interaction blocks EZH2 methyltransferase activity. Interacts with ZNF263; recruited to the SIX3 promoter along with other proteins involved in chromatin modification and transcriptional corepression where it contributes to transcriptional repression. Interacts with ARMC12. Interacts with ZMYND8; the interaction is dependent on the presence of chromatin. Interacts with DDX18; this interaction inhibits the PRC2 complex. Phosphorylated by AKT1. Phosphorylation by AKT1 reduces methyltransferase activity. Phosphorylation at Thr-345 by CDK1 and CDK2 promotes maintenance of H3K27me3 levels at EZH2-target loci, thus leading to epigenetic gene silencing. In terms of processing, sumoylated. Post-translationally, glycosylated: O-GlcNAcylation at Ser-75 by OGT increases stability of EZH2 and facilitates the formation of H3K27me3 by the PRC2/EED-EZH2 complex. In the ovary, expressed in primordial follicles and oocytes and also in external follicle cells (at protein level). Expressed in many tissues. Overexpressed in numerous tumor types including carcinomas of the breast, colon, larynx, lymphoma and testis.

It localises to the nucleus. It carries out the reaction L-lysyl(27)-[histone H3] + 3 S-adenosyl-L-methionine = N(6),N(6),N(6)-trimethyl-L-lysyl(27)-[histone H3] + 3 S-adenosyl-L-homocysteine + 3 H(+). In terms of biological role, polycomb group (PcG) protein. Catalytic subunit of the PRC2/EED-EZH2 complex, which methylates 'Lys-9' (H3K9me) and 'Lys-27' (H3K27me) of histone H3, leading to transcriptional repression of the affected target gene. Able to mono-, di- and trimethylate 'Lys-27' of histone H3 to form H3K27me1, H3K27me2 and H3K27me3, respectively. Displays a preference for substrates with less methylation, loses activity when progressively more methyl groups are incorporated into H3K27, H3K27me0 &gt; H3K27me1 &gt; H3K27me2. Compared to EZH1-containing complexes, it is more abundant in embryonic stem cells and plays a major role in forming H3K27me3, which is required for embryonic stem cell identity and proper differentiation. The PRC2/EED-EZH2 complex may also serve as a recruiting platform for DNA methyltransferases, thereby linking two epigenetic repression systems. Genes repressed by the PRC2/EED-EZH2 complex include HOXC8, HOXA9, MYT1, CDKN2A and retinoic acid target genes. EZH2 can also methylate non-histone proteins such as the transcription factor GATA4 and the nuclear receptor RORA. Regulates the circadian clock via histone methylation at the promoter of the circadian genes. Essential for the CRY1/2-mediated repression of the transcriptional activation of PER1/2 by the CLOCK-BMAL1 heterodimer; involved in the di and trimethylation of 'Lys-27' of histone H3 on PER1/2 promoters which is necessary for the CRY1/2 proteins to inhibit transcription. The sequence is that of Histone-lysine N-methyltransferase EZH2 from Homo sapiens (Human).